A 934-amino-acid polypeptide reads, in one-letter code: Serine/threonine-protein kinase KIPK1 (934 aa).

Disordered regions lie at residues 20–40 (LPKH…KDLV), 70–113 (RLMS…RFVG), 189–227 (PLMP…FGLQ), 305–343 (SSSA…RPKQ), 395–438 (SIDD…SCNV), and 466–493 (EKET…DYSR). Polar residues-rich tracts occupy residues 82 to 94 (SASA…TSPS) and 212 to 227 (NPIS…FGLQ). Residues 395-421 (SIDDNPPSYTSSHNPKICTDSLSSVSN) are compositionally biased toward polar residues. Residues 538-879 (FNLLKKLGCG…SVEIKRHPFF (342 aa)) enclose the Protein kinase domain. Residues 544 to 552 (LGCGDIGTV) and K567 each bind ATP. Catalysis depends on D663, which acts as the Proton acceptor. Residues 738–773 (SSNQQQGRKPKRGDHLSKTQQHLSRSLPQLVAEPTE) are disordered. The segment covering 755–764 (KTQQHLSRSL) has biased composition (polar residues).

Belongs to the protein kinase superfamily. Ser/Thr protein kinase family. In terms of assembly, interacts with KCBP. Interacts with PERK8, PERK9, PERK10 and PERK13. In terms of processing, autophosphorylated. Expressed in roots, cauline leaves, flowers and siliques.

The protein localises to the cytoplasm. It localises to the nucleus. It catalyses the reaction L-seryl-[protein] + ATP = O-phospho-L-seryl-[protein] + ADP + H(+). It carries out the reaction L-threonyl-[protein] + ATP = O-phospho-L-threonyl-[protein] + ADP + H(+). Functionally, could be involved in the negative regulation of root growth. The chain is Serine/threonine-protein kinase KIPK1 from Arabidopsis thaliana (Mouse-ear cress).